Here is a 215-residue protein sequence, read N- to C-terminus: Vesicle-trafficking protein SEC22b-A (215 aa).

Residues 1 to 190 (MVLQTMIVRV…RSDAKYLNTR (190 aa)) are Cytoplasmic-facing. Residues 6–119 (MIVRVADSLP…YSFIEFDTYI (114 aa)) form the Longin domain. The region spanning 134-194 (NLGNINSELH…KYLNTRSTYA (61 aa)) is the v-SNARE coiled-coil homology domain. The helical transmembrane segment at 191 to 213 (STYAKVAAGAVIIITLIIYVRFW) threads the bilayer. At 214–215 (WL) the chain is on the lumenal side.

It belongs to the synaptobrevin family. As to quaternary structure, component of 2 distinct SNARE complexes.

It is found in the endoplasmic reticulum membrane. It localises to the endoplasmic reticulum-Golgi intermediate compartment membrane. Its subcellular location is the golgi apparatus. The protein localises to the cis-Golgi network membrane. The protein resides in the trans-Golgi network membrane. It is found in the melanosome. Functionally, SNARE involved in targeting and fusion of ER-derived transport vesicles with the Golgi complex as well as Golgi-derived retrograde transport vesicles with the ER. This Danio rerio (Zebrafish) protein is Vesicle-trafficking protein SEC22b-A.